The following is a 122-amino-acid chain: Large ribosomal subunit protein bL12 (122 aa).

Belongs to the bacterial ribosomal protein bL12 family. In terms of assembly, homodimer. Part of the ribosomal stalk of the 50S ribosomal subunit. Forms a multimeric L10(L12)X complex, where L10 forms an elongated spine to which 2 to 4 L12 dimers bind in a sequential fashion. Binds GTP-bound translation factors.

Functionally, forms part of the ribosomal stalk which helps the ribosome interact with GTP-bound translation factors. Is thus essential for accurate translation. The polypeptide is Large ribosomal subunit protein bL12 (Histophilus somni (strain 129Pt) (Haemophilus somnus)).